We begin with the raw amino-acid sequence, 167 residues long: MADEATRRVVSEIPVLKTNAGPRDRELWVQRLKEEYQSLIRYVENNKNADNDWFRLESNKEGTRWFGKCWYIHDLLKYEFDIEFDIPITYPTTAPEIAVPELDGKTAKMYRGGKICLTDHFKPLWARNVPKFGLAHLMALGLGPWLAVEIPDLIQKGVIQHKEKCSQ.

Residue Cys116 is the Glycyl thioester intermediate of the active site. Lys122 is covalently cross-linked (Glycyl lysine isopeptide (Lys-Gly) (interchain with G-Cter in UFM1)).

This sequence belongs to the ubiquitin-conjugating enzyme family. UFC1 subfamily. Interacts with UBA5 (via C-terminus). Interacts with UFL1. Interacts with UFM1. Interacts with KIRREL3. Post-translationally, ufmylated at Lys-122. Deufmylated by UFSP1.

In terms of biological role, E2-like enzyme which specifically catalyzes the second step in ufmylation. Accepts the ubiquitin-like modifier UFM1 from the E1 enzyme UBA5 and forms an intermediate with UFM1 via a thioester linkage. Ufmylation is involved in various processes, such as ribosome recycling, response to DNA damage, interferon response or reticulophagy (also called ER-phagy). This is Ubiquitin-fold modifier-conjugating enzyme 1 from Bos taurus (Bovine).